The sequence spans 202 residues: NADH-quinone oxidoreductase subunit C (202 aa).

The protein belongs to the complex I 30 kDa subunit family. As to quaternary structure, NDH-1 is composed of 14 different subunits. Subunits NuoB, C, D, E, F, and G constitute the peripheral sector of the complex.

It is found in the cell inner membrane. It catalyses the reaction a quinone + NADH + 5 H(+)(in) = a quinol + NAD(+) + 4 H(+)(out). In terms of biological role, NDH-1 shuttles electrons from NADH, via FMN and iron-sulfur (Fe-S) centers, to quinones in the respiratory chain. The immediate electron acceptor for the enzyme in this species is believed to be ubiquinone. Couples the redox reaction to proton translocation (for every two electrons transferred, four hydrogen ions are translocated across the cytoplasmic membrane), and thus conserves the redox energy in a proton gradient. This is NADH-quinone oxidoreductase subunit C from Brucella abortus (strain 2308).